The primary structure comprises 301 residues: Probable 5-dehydro-4-deoxyglucarate dehydratase (301 aa).

The protein belongs to the DapA family.

The catalysed reaction is 5-dehydro-4-deoxy-D-glucarate + H(+) = 2,5-dioxopentanoate + CO2 + H2O. The protein operates within carbohydrate acid metabolism; D-glucarate degradation; 2,5-dioxopentanoate from D-glucarate: step 2/2. In Rhizobium meliloti (strain 1021) (Ensifer meliloti), this protein is Probable 5-dehydro-4-deoxyglucarate dehydratase.